A 116-amino-acid chain; its full sequence is Non-specific lipid-transfer protein (116 aa).

Residues 1–23 (MASMKVVCVALIMCIVIAPMAES) form the signal peptide. 4 disulfide bridges follow: Cys-27–Cys-74, Cys-37–Cys-51, Cys-52–Cys-97, and Cys-72–Cys-111.

This sequence belongs to the plant LTP family.

Plant non-specific lipid-transfer proteins transfer phospholipids as well as galactolipids across membranes. May play a role in wax or cutin deposition in the cell walls of expanding epidermal cells and certain secretory tissues. The sequence is that of Non-specific lipid-transfer protein from Cicer arietinum (Chickpea).